The sequence spans 653 residues: UvrABC system protein C (653 aa).

One can recognise a GIY-YIG domain in the interval 44–122 (NAPGVYRMVN…IKRLRPRFNV (79 aa)). The 36-residue stretch at 232–267 (STVKAEIATAMQEASQALDFERAAIYRDRLAALSHV) folds into the UVR domain.

This sequence belongs to the UvrC family. In terms of assembly, interacts with UvrB in an incision complex.

Its subcellular location is the cytoplasm. In terms of biological role, the UvrABC repair system catalyzes the recognition and processing of DNA lesions. UvrC both incises the 5' and 3' sides of the lesion. The N-terminal half is responsible for the 3' incision and the C-terminal half is responsible for the 5' incision. The polypeptide is UvrABC system protein C (Chelativorans sp. (strain BNC1)).